We begin with the raw amino-acid sequence, 303 residues long: Methionyl-tRNA formyltransferase (303 aa).

108–111 is a (6S)-5,6,7,8-tetrahydrofolate binding site; sequence SDLP.

The protein belongs to the Fmt family.

It carries out the reaction L-methionyl-tRNA(fMet) + (6R)-10-formyltetrahydrofolate = N-formyl-L-methionyl-tRNA(fMet) + (6S)-5,6,7,8-tetrahydrofolate + H(+). Functionally, attaches a formyl group to the free amino group of methionyl-tRNA(fMet). The formyl group appears to play a dual role in the initiator identity of N-formylmethionyl-tRNA by promoting its recognition by IF2 and preventing the misappropriation of this tRNA by the elongation apparatus. This Rickettsia rickettsii (strain Iowa) protein is Methionyl-tRNA formyltransferase.